The chain runs to 419 residues: MGNRSTADADGLLAGRGPAAGASAGASAGLAGQGAAALVGGVLLIGAVLAGNSLVCVSVATERALQTPTNSFIVSLAAADLLLALLVLPLFVYSEVQGGAWLLSPRLCDALMAMDVMLCTASIFNLCAISVDRFVAVAVPLRYNRQGGSRRQLLLIGATWLLSAAVAAPVLCGLNDVRGRDPAVCRLEDRDYVVYSSVCSFFLPCPLMLLLYWATFRGLQRWEVARRAKLHGRAPRRPSGPGPPSPTPPAPRLPQDPCGPDCAPPAPGLPRGPCGPDCAPAAPSLPQDPCGPDCAPPAPGLPPDPCGSNCAPPDAVRAAALPPQTPPQTRRRRRAKITGRERKAMRVLPVVVGAFLLCWTPFFVVHITQALCPACSVPPRLVSAVTWLGYVNSALNPVIYTVFNAEFRNVFRKALRACC.

At 1–29 (MGNRSTADADGLLAGRGPAAGASAGASAG) the chain is on the extracellular side. The N-linked (GlcNAc...) asparagine glycan is linked to asparagine 3. Residues 30 to 50 (LAGQGAAALVGGVLLIGAVLA) form a helical membrane-spanning segment. The Cytoplasmic portion of the chain corresponds to 51–71 (GNSLVCVSVATERALQTPTNS). The chain crosses the membrane as a helical span at residues 72–92 (FIVSLAAADLLLALLVLPLFV). Residue aspartate 80 coordinates Na(+). The Extracellular portion of the chain corresponds to 93–110 (YSEVQGGAWLLSPRLCDA). Cysteine 108 and cysteine 185 form a disulfide bridge. Residues 111–131 (LMAMDVMLCTASIFNLCAISV) traverse the membrane as a helical segment. Aspartate 115 is a binding site for (2R,3R)-nemonapride. Serine 122 serves as a coordination point for Na(+). Topologically, residues 132-152 (DRFVAVAVPLRYNRQGGSRRQ) are cytoplasmic. Residues 153–173 (LLLIGATWLLSAAVAAPVLCG) traverse the membrane as a helical segment. The Extracellular portion of the chain corresponds to 174 to 192 (LNDVRGRDPAVCRLEDRDY). A helical transmembrane segment spans residues 193-213 (VVYSSVCSFFLPCPLMLLLYW). Residue serine 196 participates in (2R,3R)-nemonapride binding. The Cytoplasmic segment spans residues 214–346 (ATFRGLQRWE…ITGRERKAMR (133 aa)). Positions 230–264 (LHGRAPRRPSGPGPPSPTPPAPRLPQDPCGPDCAP) are disordered. Residues 238–254 (PSGPGPPSPTPPAPRLP) show a composition bias toward pro residues. A 1; approximate repeat occupies 249-264 (PAPRLPQDPCGPDCAP). The segment at 249–312 (PAPRLPQDPC…PDPCGSNCAP (64 aa)) is 4 X 16 AA approximate tandem repeats of [PA]-A-P-G-L-P-[PQR]-[DG]-P-C-G-P-D-C-A-P. 2 consecutive repeat copies span residues 265–280 (PAPGLPRGPCGPDCAP) and 281–296 (AAPSLPQDPCGPDCAP). The 4; approximate repeat unit spans residues 297–312 (PAPGLPPDPCGSNCAP). The tract at residues 317–336 (RAAALPPQTPPQTRRRRRAK) is disordered. A helical transmembrane segment spans residues 347–367 (VLPVVVGAFLLCWTPFFVVHI). Over 368 to 382 (TQALCPACSVPPRLV) the chain is Extracellular. A disulfide bridge connects residues cysteine 372 and cysteine 375. A helical membrane pass occupies residues 383 to 403 (SAVTWLGYVNSALNPVIYTVF). Over 404–419 (NAEFRNVFRKALRACC) the chain is Cytoplasmic. Residue cysteine 419 is the site of S-palmitoyl cysteine attachment.

This sequence belongs to the G-protein coupled receptor 1 family. Forms homo- and heterooligomers with DRD2. D4.7 allele exhibits higher affinity for homodimers compared to DRD2 heterodimers, while alleles D42. and 4.4 have similar affinities for both. The interaction with DRD2 may modulate agonist-induced downstream signaling. Interacts with CLIC6. Interacts with GPRASP1. May interact with ADORA2A. Interacts with KLHL12. Post-translationally, polyubiquitinated by the BCR(KLHL12) E3 ubiquitin ligase complex: polyubiquitination does not lead to degradation of DRD4 protein. Palmitoylated. Palmitoylation of the C-terminal Cys is important for normal expression at the cell membrane. In terms of tissue distribution, highly expressed in retina. Detected at much lower levels in brain, in amygdala, thalamus, hypothalamus, cerebellum and pituitary.

It is found in the cell membrane. With respect to regulation, signaling in response to agonists such as dopamine, epinephrine and norepinephrine is modulated by Na(+); lower Na(+) levels result in higher receptor activity (in vitro). Functionally, dopamine receptor responsible for neuronal signaling in the mesolimbic system of the brain, an area of the brain that regulates emotion and complex behavior. Activated by dopamine, but also by epinephrine and norepinephrine, and by numerous synthetic agonists and drugs. Agonist binding triggers signaling via G proteins that inhibit adenylyl cyclase. Modulates the circadian rhythm of contrast sensitivity by regulating the rhythmic expression of NPAS2 in the retinal ganglion cells. The sequence is that of D(4) dopamine receptor (DRD4) from Homo sapiens (Human).